The chain runs to 340 residues: UDP-glucose 4-epimerase (340 aa).

Residues 12-13 (FI), 32-37 (DNYGNS), 59-60 (DV), 81-85 (FAGLK), Asn100, Ser125, Tyr150, Lys154, and Phe179 each bind NAD(+). Residues Ser125 and Tyr150 each contribute to the substrate site. Tyr150 acts as the Proton acceptor in catalysis. Residues Asn180, 200-201 (NL), 217-219 (QVY), Arg232, and 292-295 (RPGD) contribute to the substrate site.

This sequence belongs to the NAD(P)-dependent epimerase/dehydratase family. Homodimer. NAD(+) serves as cofactor.

It catalyses the reaction UDP-alpha-D-glucose = UDP-alpha-D-galactose. It participates in carbohydrate metabolism; galactose metabolism. Its function is as follows. Involved in the metabolism of galactose. Catalyzes the conversion of UDP-galactose (UDP-Gal) to UDP-glucose (UDP-Glc) through a mechanism involving the transient reduction of NAD. Can also epimerize UDP-GalNAc to UDP-GlcNAc. Involved in the lacto-N-biose I/galacto-N-biose (LNB/GNB) degradation pathway, which is important for host intestinal colonization by bifidobacteria. This chain is UDP-glucose 4-epimerase (lnpD), found in Bifidobacterium longum subsp. longum (strain ATCC 15707 / DSM 20219 / JCM 1217 / NCTC 11818 / E194b).